We begin with the raw amino-acid sequence, 278 residues long: Probable endonuclease 4 (278 aa).

9 residues coordinate Zn(2+): histidine 69, histidine 109, glutamate 145, aspartate 179, histidine 182, histidine 214, aspartate 227, histidine 229, and glutamate 259.

The protein belongs to the AP endonuclease 2 family. Requires Zn(2+) as cofactor.

It carries out the reaction Endonucleolytic cleavage to 5'-phosphooligonucleotide end-products.. Endonuclease IV plays a role in DNA repair. It cleaves phosphodiester bonds at apurinic or apyrimidinic (AP) sites, generating a 3'-hydroxyl group and a 5'-terminal sugar phosphate. The polypeptide is Probable endonuclease 4 (Bacteroides fragilis (strain ATCC 25285 / DSM 2151 / CCUG 4856 / JCM 11019 / LMG 10263 / NCTC 9343 / Onslow / VPI 2553 / EN-2)).